Here is a 114-residue protein sequence, read N- to C-terminus: Putative neurotoxin 7 (114 aa).

This sequence belongs to the scolopendra neurotoxin 8 family. In terms of processing, contains 3 disulfide bonds. Expressed by the venom gland.

The protein resides in the secreted. This chain is Putative neurotoxin 7, found in Scolopendra mutilans (Chinese red-headed centipede).